We begin with the raw amino-acid sequence, 198 residues long: MQYPEPISKLIDSFMKLPGIGPKTAVRLAFFVLSMQEDVVLDFAKALVNAKRNLTYCSVCGHITDQDPCYICEDTRRDQSVICVVQDPKDVIAMEKMKEYNGLYHVLHGAISPMDGIGPEDIKIPDLLKRLQDDQVTEVILATNPNIEGEATAMYISRLLKPSGIKLSRIAHGLPVGGDLEYADEVTLSKALEGRREM.

The segment at 57-72 (CSVCGHITDQDPCYIC) adopts a C4-type zinc-finger fold. In terms of domain architecture, Toprim spans 80-175 (SVICVVQDPK…KLSRIAHGLP (96 aa)).

This sequence belongs to the RecR family.

Functionally, may play a role in DNA repair. It seems to be involved in an RecBC-independent recombinational process of DNA repair. It may act with RecF and RecO. This Bacillus pumilus (strain SAFR-032) protein is Recombination protein RecR.